Reading from the N-terminus, the 324-residue chain is 4-hydroxybenzoyl-CoA reductase subunit beta (324 aa).

In terms of domain architecture, FAD-binding PCMH-type spans 2–217 (NILTDFRTHR…AAIEVPPTGA (216 aa)). FAD contacts are provided by residues 29-36 (PLGAGTDL), Thr-111, Asn-115, and Gln-118. [4Fe-4S] cluster contacts are provided by Cys-122, Cys-138, Cys-146, and Cys-155. Asp-162 and Lys-224 together coordinate FAD.

In terms of assembly, heterohexamer of two alpha, two beta and two gamma subunits. It depends on FAD as a cofactor. [4Fe-4S] cluster is required as a cofactor.

The catalysed reaction is oxidized 2[4Fe-4S]-[ferredoxin] + benzoyl-CoA + H2O = 4-hydroxybenzoyl-CoA + reduced 2[4Fe-4S]-[ferredoxin] + 2 H(+). Its activity is regulated as follows. Inactivated by low concentrations of cyanide in vitro. Its function is as follows. Component of a complex that catalyzes the reductive dehydroxylation of 4-hydroxybenzoyl-CoA to benzoyl-CoA. Reaction is not reversible. Is a key enzyme in the anaerobic degradation of phenolic compounds. In Thauera aromatica, this protein is 4-hydroxybenzoyl-CoA reductase subunit beta (hcrB).